The primary structure comprises 284 residues: Nucleotide-binding protein Shewmr4_0670 (284 aa).

8–15 (GRSGSGKS) contributes to the ATP binding site. GTP is bound at residue 56-59 (DVRN).

The protein belongs to the RapZ-like family.

Displays ATPase and GTPase activities. The protein is Nucleotide-binding protein Shewmr4_0670 of Shewanella sp. (strain MR-4).